Here is a 324-residue protein sequence, read N- to C-terminus: Polycomb complex protein BMI-1-B (324 aa).

The RING-type zinc finger occupies Cys-18–Asp-57. The Nuclear localization signal motif lies at Lys-81–Arg-95. A disordered region spans residues Ile-232–Gly-324. Positions Asp-256 to Pro-279 are enriched in low complexity. 2 stretches are compositionally biased toward polar residues: residues Val-280–Gly-295 and Asn-303–Gly-324.

Component of a PRC1-like complex. Homodimer. Interacts with cbx2.

The protein resides in the nucleus. Component of a Polycomb group (PcG) multiprotein PRC1-like complex, a complex class required to maintain the transcriptionally repressive state of many genes, including Hox genes, throughout development. PcG PRC1 complex acts via chromatin remodeling and modification of histones; it mediates monoubiquitination of histone H2A 'Lys-119', rendering chromatin heritably changed in its expressibility. In the PRC1 complex, it is required to stimulate the E3 ubiquitin-protein ligase activity of rnf2. The protein is Polycomb complex protein BMI-1-B (bmi1b) of Danio rerio (Zebrafish).